The following is a 52-amino-acid chain: uncharacterized protein (52 aa).

The chain crosses the membrane as a helical span at residues 7 to 27 (MFQLFVFIIFAAVVFAAVTGF).

The protein localises to the membrane. This is an uncharacterized protein from Bacillus subtilis (strain 168).